A 303-amino-acid chain; its full sequence is Taste receptor type 2 member 13 (303 aa).

Residues 1–7 are Extracellular-facing; the sequence is MESALPS. The chain crosses the membrane as a helical span at residues 8–28; it reads IFTLVIIAEFIIGNLSNGFIV. Topologically, residues 29–55 are cytoplasmic; the sequence is LINCIDWVSKRELSSVDKLLIILAISR. The chain crosses the membrane as a helical span at residues 56–76; the sequence is IGLIWEILVSWFLALHSLAIF. Over 77–85 the chain is Extracellular; it reads VSGTGLRIM. Residues 86–106 traverse the membrane as a helical segment; sequence IFSWIVSNHFNLWLATILSIF. Topologically, residues 107-128 are cytoplasmic; the sequence is YLLKIASFSSPAFLYLKRRVNK. Residues 129-149 form a helical membrane-spanning segment; sequence VILMILLGTLVFLFLNLIQIN. Over 150-184 the chain is Extracellular; the sequence is MLIKDWLDRYERNTTWNFSMSDFETFSVSVRFTMT. N-linked (GlcNAc...) asparagine glycosylation is found at asparagine 162 and asparagine 166. A helical membrane pass occupies residues 185–205; it reads MFSLTPFTVAFISFLLLVFSL. At 206 to 232 the chain is on the cytoplasmic side; sequence QKHLQKMQLNYKGHRDPRTKVHTNALK. The helical transmembrane segment at 233 to 253 threads the bilayer; it reads IVISFLLFYASFFLSILISWI. Residues 254 to 261 are Extracellular-facing; it reads SELYQNTV. A helical transmembrane segment spans residues 262-282; it reads IYMLCETIGAFYPSSHSFLLI. The Cytoplasmic portion of the chain corresponds to 283–303; the sequence is LGNAKLRQAFLLVAAKVWAKR.

This sequence belongs to the G-protein coupled receptor T2R family.

It is found in the membrane. Its function is as follows. Receptor that may play a role in the perception of bitterness and is gustducin-linked. May play a role in sensing the chemical composition of the gastrointestinal content. The activity of this receptor may stimulate alpha gustducin, mediate PLC-beta-2 activation and lead to the gating of TRPM5. This is Taste receptor type 2 member 13 (TAS2R13) from Pan paniscus (Pygmy chimpanzee).